The chain runs to 161 residues: Ribosomal RNA large subunit methyltransferase H (161 aa).

S-adenosyl-L-methionine contacts are provided by residues Leu-78, Gly-110, and 129–134 (LSRLTF).

The protein belongs to the RNA methyltransferase RlmH family. In terms of assembly, homodimer.

It is found in the cytoplasm. It catalyses the reaction pseudouridine(1915) in 23S rRNA + S-adenosyl-L-methionine = N(3)-methylpseudouridine(1915) in 23S rRNA + S-adenosyl-L-homocysteine + H(+). In terms of biological role, specifically methylates the pseudouridine at position 1915 (m3Psi1915) in 23S rRNA. The polypeptide is Ribosomal RNA large subunit methyltransferase H (Heliobacterium modesticaldum (strain ATCC 51547 / Ice1)).